The following is a 262-amino-acid chain: Acetaldehyde dehydrogenase 7 (262 aa).

Residue 10 to 13 participates in NAD(+) binding; that stretch reads SGNI. The active-site Acyl-thioester intermediate is the cysteine 128. Position 159–167 (159–167) interacts with NAD(+); sequence SAGPGTRAN.

It belongs to the acetaldehyde dehydrogenase family.

The enzyme catalyses acetaldehyde + NAD(+) + CoA = acetyl-CoA + NADH + H(+). This is Acetaldehyde dehydrogenase 7 from Rhodococcus jostii (strain RHA1).